The primary structure comprises 378 residues: Probable S-(hydroxymethyl)glutathione dehydrogenase 1 (378 aa).

Residue Cys-47 participates in Zn(2+) binding. Residue His-48 participates in NAD(+) binding. Zn(2+) contacts are provided by His-69, Glu-70, Cys-99, Cys-102, Cys-105, Cys-113, and Cys-176. NAD(+) is bound by residues Gly-201–Gly-206, Asp-225, Ile-293–Val-295, and Ser-318–Phe-320.

Belongs to the zinc-containing alcohol dehydrogenase family. Class-III subfamily. It depends on Zn(2+) as a cofactor.

It catalyses the reaction a primary alcohol + NAD(+) = an aldehyde + NADH + H(+). The catalysed reaction is a secondary alcohol + NAD(+) = a ketone + NADH + H(+). The enzyme catalyses S-(hydroxymethyl)glutathione + NADP(+) = S-formylglutathione + NADPH + H(+). It carries out the reaction S-(hydroxymethyl)glutathione + NAD(+) = S-formylglutathione + NADH + H(+). It catalyses the reaction S-nitrosoglutathione + NADH + H(+) = S-(hydroxysulfenamide)glutathione + NAD(+). Functionally, oxidizes long-chain alcohols and, in the presence of glutathione, is able to oxidize formaldehyde. Also acts as a S-nitroso-glutathione reductase by catalyzing the NADH-dependent reduction of S-nitrosoglutathione, thereby regulating protein S-nitrosylation. This is Probable S-(hydroxymethyl)glutathione dehydrogenase 1 from Schizosaccharomyces pombe (strain 972 / ATCC 24843) (Fission yeast).